The chain runs to 130 residues: MEEKIILSIQNPEDVLISYVDIYLGDKNVSLEVLSKDTAKINLPFDKDEGEGEIVVKIKYKTLPHYKNNNNKKEVKKQDYKNLTQTLNEITKKTTNRKDNDIIIADSKPVSLDGLKKEEKKKKLNDIIIV.

This is an uncharacterized protein from Methanocaldococcus jannaschii (strain ATCC 43067 / DSM 2661 / JAL-1 / JCM 10045 / NBRC 100440) (Methanococcus jannaschii).